The primary structure comprises 298 residues: Mitochondrial substrate carrier family protein N (298 aa).

The Mitochondrial intermembrane segment spans residues 1–13 (MAGDLTPSLFLKY). 3 Solcar repeats span residues 8–92 (SLFL…FKKT), 104–188 (FRIP…TAEN), and 207–290 (QKLS…IKQM). A helical transmembrane segment spans residues 14-34 (GFGGALSCSITHSLVVPLDVV). The Mitochondrial matrix portion of the chain corresponds to 35–60 (KTLLQTNPGKYTGMMNGFSTVIKEQG). Residues 61–81 (PSGLLQGLGPTAVGYALQGFL) form a helical membrane-spanning segment. Topologically, residues 82–105 (KFGFYEVFKKTYADAVGEKADQFR) are mitochondrial intermembrane. The chain crosses the membrane as a helical span at residues 106–126 (IPIWLAASATAEVIADIALCP). The Mitochondrial matrix portion of the chain corresponds to 127 to 162 (NEAVRIRLVAEPTFAKSPVEAFGKIFKQEGVLGFYK). A helical transmembrane segment spans residues 163 to 179 (GLPPILLKQVPYTMAKF). Residues 180–208 (AVFEFTAENVYKGLAASGKPKESLTDGQK) are Mitochondrial intermembrane-facing. A helical membrane pass occupies residues 209–229 (LSVSLGSGIVAGIVAAIVSQP). The Mitochondrial matrix segment spans residues 230 to 262 (ADTILSKINQEKTDGGVVKAIGNIMRRLGVRGL). The helical transmembrane segment at 263–283 (FLGLPTRCFMVGTLTAGQFFI) threads the bilayer. Over 284–298 (YDGIKQMLGLTPAKK) the chain is Mitochondrial intermembrane.

The protein belongs to the mitochondrial carrier (TC 2.A.29) family.

Its subcellular location is the mitochondrion inner membrane. Mitochondrial solute carriers shuttle metabolites, nucleotides, and cofactors through the mitochondrial inner membrane. Transports phosphate groups from the cytosol to the mitochondrial matrix. Phosphate is cotransported with H(+). The sequence is that of Mitochondrial substrate carrier family protein N (mcfN) from Dictyostelium discoideum (Social amoeba).